A 97-amino-acid polypeptide reads, in one-letter code: UPF0235 protein AZOSEA09540 (97 aa).

It belongs to the UPF0235 family.

The sequence is that of UPF0235 protein AZOSEA09540 from Aromatoleum aromaticum (strain DSM 19018 / LMG 30748 / EbN1) (Azoarcus sp. (strain EbN1)).